The chain runs to 406 residues: Sprouty-related, EVH1 domain-containing protein 1 (406 aa).

A WH1 domain is found at Gly3–Leu120. Positions Leu124–His154 are disordered. Positions Asn142–His154 are enriched in basic and acidic residues. One can recognise a KBD domain in the interval Pro195–Thr247. Positions Ser296–Ala404 constitute an SPR domain.

Palmitoylated by ZDHHC17/HIP14. In terms of processing, ubiquitinated. Post-translationally, phosphorylated on tyrosine.

It localises to the cell membrane. Tyrosine kinase substrate that inhibits growth-factor-mediated activation of MAP kinase. The polypeptide is Sprouty-related, EVH1 domain-containing protein 1 (spred1) (Xenopus tropicalis (Western clawed frog)).